The primary structure comprises 213 residues: Maleylacetoacetate isomerase (213 aa).

Residues 3 to 84 (NETVLYDYWR…YLAETRDGTG (82 aa)) form the GST N-terminal domain. The region spanning 89–213 (HPIDRQRVRA…QRAHPDRAKP (125 aa)) is the GST C-terminal domain.

Belongs to the GST superfamily. Zeta family.

It carries out the reaction 4-maleylacetoacetate = 4-fumarylacetoacetate. It functions in the pathway amino-acid degradation; L-phenylalanine degradation; acetoacetate and fumarate from L-phenylalanine: step 5/6. This Rhizobium meliloti (strain 1021) (Ensifer meliloti) protein is Maleylacetoacetate isomerase (maiA).